The following is a 568-amino-acid chain: Oxygen-dependent choline dehydrogenase (568 aa).

FAD is bound at residue 8 to 37 (DYIIIGAGSAGNTLAARLTEDAGVTVLLLE). The active-site Proton acceptor is the H477.

This sequence belongs to the GMC oxidoreductase family. The cofactor is FAD.

It catalyses the reaction choline + A = betaine aldehyde + AH2. It carries out the reaction betaine aldehyde + NAD(+) + H2O = glycine betaine + NADH + 2 H(+). The protein operates within amine and polyamine biosynthesis; betaine biosynthesis via choline pathway; betaine aldehyde from choline (cytochrome c reductase route): step 1/1. Functionally, involved in the biosynthesis of the osmoprotectant glycine betaine. Catalyzes the oxidation of choline to betaine aldehyde and betaine aldehyde to glycine betaine at the same rate. In Pseudomonas savastanoi pv. phaseolicola (strain 1448A / Race 6) (Pseudomonas syringae pv. phaseolicola (strain 1448A / Race 6)), this protein is Oxygen-dependent choline dehydrogenase.